Reading from the N-terminus, the 58-residue chain is SEVKMDAEFRHDSGYEVHHQKLVFFAEDVGSNKGAIIGLMVGGVVIATVIVITLVMLK.

The Extracellular segment spans residues 1–33 (SEVKMDAEFRHDSGYEVHHQKLVFFAEDVGSNK). Residues H11, Y15, H18, and H19 each contribute to the Cu(2+) site. Zn(2+)-binding residues include H11, Y15, H18, and H19. The chain crosses the membrane as a helical span at residues 34-57 (GAIIGLMVGGVVIATVIVITLVML). A topological domain (cytoplasmic) is located at residue K58.

It belongs to the APP family. In terms of assembly, binds, via its C-terminus, to the PID domain of several cytoplasmic proteins, including APBB family members, the APBA family, MAPK8IP1, SHC1 and NUMB and DAB1. Binding to DAB1 inhibits its serine phosphorylation. Interacts (via NPXY motif) with DAB2 (via PID domain); the interaction is impaired by tyrosine phosphorylation of the NPXY motif. Also interacts with GPCR-like protein BPP, APPBP1, IB1, KNS2 (via its TPR domains), APPBP2 (via BaSS) and DDB1. In vitro, it binds MAPT via the MT-binding domains. Associates with microtubules in the presence of ATP and in a kinesin-dependent manner. Interacts, through a C-terminal domain, with GNAO1. Interacts with CPEB1, ANKS1B and AGER. Interacts with ITM2B. Interacts with ITM2C. Interacts with IDE. Can form homodimers; dimerization is enhanced in the presence of Cu(2+) ions. Can form homodimers; this is promoted by heparin binding. Interacts with SORL1 (via N-terminal ectodomain); this interaction retains APP in the trans-Golgi network and reduces processing into soluble APP-alpha and amyloid-beta peptides. Interacts with PLD3. Interacts with VDAC1. Interacts with NSG1; could regulate APP processing. Amyloid-beta protein 42 interacts with FPR2. Interacts with LRRK2. Interacts (via cytoplasmic domain) with KIF5B. Interacts (via C-terminus) with APBB2/FE65L1 (via C-terminus). Interacts (via intracellular domain) with APBB3. Proteolytically processed under normal cellular conditions. Cleavage either by alpha-secretase, beta-secretase or theta-secretase leads to generation and extracellular release of soluble APP peptides, S-APP-alpha and S-APP-beta, and the retention of corresponding membrane-anchored C-terminal fragments, C80, C83 and C99. Subsequent processing of C80 and C83 by gamma-secretase yields P3 peptides. This is the major secretory pathway and is non-amyloidogenic. Alternatively, presenilin/nicastrin-mediated gamma-secretase processing of C99 releases the amyloid-beta proteins, amyloid-beta protein 40 and amyloid-beta protein 42, major components of amyloid plaques, and the cytotoxic C-terminal fragments, gamma-CTF(50), gamma-CTF(57) and gamma-CTF(59). PSEN1 cleavage is more efficient with C83 than with C99 as substrate (in vitro). Amyloid-beta protein 40 and Amyloid-beta protein 42 are cleaved by ACE. Many other minor amyloid-beta peptides, amyloid-beta 1-X peptides, are found in cerebral spinal fluid (CSF) including the amyloid-beta X-15 peptides, produced from the cleavage by alpha-secretase.

It localises to the cell membrane. The protein resides in the membrane. The protein localises to the perikaryon. Its subcellular location is the cell projection. It is found in the growth cone. It localises to the clathrin-coated pit. The protein resides in the early endosome. The protein localises to the cytoplasmic vesicle. Its subcellular location is the secreted. It is found in the cell surface. It localises to the nucleus. The protein resides in the cytoplasm. Functions as a cell surface receptor and performs physiological functions on the surface of neurons relevant to neurite growth, neuronal adhesion and axonogenesis. Interaction between APP molecules on neighboring cells promotes synaptogenesis. Involved in cell mobility and transcription regulation through protein-protein interactions. Can promote transcription activation through binding to APBB1-KAT5 and inhibit Notch signaling through interaction with Numb. Couples to apoptosis-inducing pathways such as those mediated by G(o) and JIP. Inhibits G(o)-alpha ATPase activity. Acts as a kinesin I membrane receptor, mediating the axonal transport of beta-secretase and presenilin 1. By acting as a kinesin I membrane receptor, plays a role in axonal anterograde transport of cargo towards synapses in axons. May be involved in copper homeostasis/oxidative stress through copper ion reduction. In vitro, copper-metallated APP induces neuronal death directly or is potentiated through Cu(2+)-mediated low-density lipoprotein oxidation. Can regulate neurite outgrowth through binding to components of the extracellular matrix such as heparin and collagen I and IV. Induces a AGER-dependent pathway that involves activation of p38 MAPK, resulting in internalization of amyloid-beta peptide and mitochondrial dysfunction in cultured cortical neurons. Provides Cu(2+) ions for GPC1 which are required for release of nitric oxide (NO) and subsequent degradation of the heparan sulfate chains on GPC1. The sequence is that of Amyloid-beta precursor protein (APP) from Ovis aries (Sheep).